We begin with the raw amino-acid sequence, 135 residues long: ATP synthase epsilon chain (135 aa).

The protein belongs to the ATPase epsilon chain family. F-type ATPases have 2 components, CF(1) - the catalytic core - and CF(0) - the membrane proton channel. CF(1) has five subunits: alpha(3), beta(3), gamma(1), delta(1), epsilon(1). CF(0) has three main subunits: a, b and c.

It localises to the cell inner membrane. Produces ATP from ADP in the presence of a proton gradient across the membrane. This Rhodopseudomonas palustris (strain HaA2) protein is ATP synthase epsilon chain.